We begin with the raw amino-acid sequence, 120 residues long: Basic phospholipase A2 homolog LmutTX (120 aa).

Intrachain disulfides connect Cys26–Cys114, Cys28–Cys44, Cys43–Cys95, Cys49–Cys120, Cys50–Cys88, Cys57–Cys81, and Cys75–Cys86.

This sequence belongs to the phospholipase A2 family. Group II subfamily. K49 sub-subfamily. As to quaternary structure, monomer. As to expression, expressed by the venom gland.

The protein resides in the secreted. Its function is as follows. Snake venom phospholipase A2 homolog that lacks enzymatic activity. Shows moderate cytotoxicity against C2C12 myotubes (activity above 200 ug/mL). Also shows antibacterial activity against both Gram-positive and Gram-negative bacteria. A model of myotoxic mechanism has been proposed: an apo Lys49-PLA2 is activated by the entrance of a hydrophobic molecule (e.g. fatty acid) at the hydrophobic channel of the protein leading to a reorientation of a monomer. This reorientation causes a transition between 'inactive' to 'active' states, causing alignment of C-terminal and membrane-docking sites (MDoS) side-by-side and putting the membrane-disruption sites (MDiS) in the same plane, exposed to solvent and in a symmetric position for both monomers. The MDoS region stabilizes the toxin on membrane by the interaction of charged residues with phospholipid head groups. Subsequently, the MDiS region destabilizes the membrane with penetration of hydrophobic residues. This insertion causes a disorganization of the membrane, allowing an uncontrolled influx of ions (i.e. calcium and sodium), and eventually triggering irreversible intracellular alterations and cell death. The protein is Basic phospholipase A2 homolog LmutTX of Lachesis muta muta (Bushmaster).